The following is a 582-amino-acid chain: MGSCVSSPLKGSPFGKRPVRRRHSSNSRTSSVPRFDSSTNLSRRLIFQPPSRVLPEPIGDGIHLKYDLGKELGRGEFGVTHECIEISTRERFACKRISKEKLRTEIDVEDVRREVEIMRCLPKHPNIVSFKEAFEDKDAVYLVMEICEGGELFDRIVSRGHYTERAAASVAKTILEVVKVCHEHGVIHRDLKPENFLFSNGTETAQLKAIDFGLSIFFKPAQRFNEIVGSPYYMAPEVLRRNYGPEIDVWSAGVILYILLCGVPPFWAETEEGIAHAIVRGNIDFERDPWPKVSHEAKELVKNMLDANPYSRLTVQEVLEHPWIRNAERAPNVNLGDNVRTKIQQFLLMNRFKKKVLRIVADNLPNEEIAAIVQMFQTMDTDKNGHLTFEELRDGLKKIGQVVPDGDVKMLMDAADTDGNGMLSCDEFVTLSIHLKRMGCDEHLQEAFKYFDKNGNGFIELDELKVALCDDKLGHANGNDQWIKDIFFDVDLNKDGRISFDEFKAMMKSGTDWKMASRQYSRALLNALSIKMFKEDFGDNGPKSHSMEFPIARKRAKLLDAPKNKSMELQISKTYKPSGLRN.

Residues 1–36 (MGSCVSSPLKGSPFGKRPVRRRHSSNSRTSSVPRFD) form a disordered region. Glycine 2 carries N-myristoyl glycine lipidation. In terms of domain architecture, Protein kinase spans 66-324 (YDLGKELGRG…VQEVLEHPWI (259 aa)). Residues 72–80 (LGRGEFGVT) and lysine 95 contribute to the ATP site. The active-site Proton acceptor is the aspartate 190. Residue serine 230 is modified to Phosphoserine. The segment at 330–360 (APNVNLGDNVRTKIQQFLLMNRFKKKVLRIV) is autoinhibitory domain. 4 consecutive EF-hand domains span residues 367–402 (EEIAAIVQMFQTMDTDKNGHLTFEELRDGLKKIGQV), 403–438 (VPDGDVKMLMDAADTDGNGMLSCDEFVTLSIHLKRM), 439–474 (GCDEHLQEAFKYFDKNGNGFIELDELKVALCDDKLG), and 478–513 (GNDQWIKDIFFDVDLNKDGRISFDEFKAMMKSGTDW). Positions 380, 382, 384, 386, 391, 416, 418, 420, 422, 427, 452, 454, 456, 463, 491, 493, 495, and 497 each coordinate Ca(2+). Serine 499 carries the phosphoserine modification. Ca(2+) is bound at residue glutamate 502.

Belongs to the protein kinase superfamily. Ser/Thr protein kinase family. CDPK subfamily.

Its subcellular location is the membrane. It carries out the reaction L-seryl-[protein] + ATP = O-phospho-L-seryl-[protein] + ADP + H(+). The catalysed reaction is L-threonyl-[protein] + ATP = O-phospho-L-threonyl-[protein] + ADP + H(+). Activated by calcium. Autophosphorylation may play an important role in the regulation of the kinase activity. Functionally, may play a role in signal transduction pathways that involve calcium as a second messenger. In Arabidopsis thaliana (Mouse-ear cress), this protein is Calcium-dependent protein kinase 24 (CPK24).